Reading from the N-terminus, the 238-residue chain is 2,3-bisphosphoglycerate-dependent phosphoglycerate mutase (238 aa).

Residues 8–15 (RHGQSEWN), 21–22 (TG), Arg60, 86–89 (ERHY), Lys97, 113–114 (RR), and 182–183 (GN) contribute to the substrate site. Catalysis depends on His9, which acts as the Tele-phosphohistidine intermediate. The Proton donor/acceptor role is filled by Glu86.

It belongs to the phosphoglycerate mutase family. BPG-dependent PGAM subfamily. In terms of assembly, homodimer.

The catalysed reaction is (2R)-2-phosphoglycerate = (2R)-3-phosphoglycerate. It participates in carbohydrate degradation; glycolysis; pyruvate from D-glyceraldehyde 3-phosphate: step 3/5. In terms of biological role, catalyzes the interconversion of 2-phosphoglycerate and 3-phosphoglycerate. The protein is 2,3-bisphosphoglycerate-dependent phosphoglycerate mutase of Pelagibacter ubique (strain HTCC1062).